The following is a 328-amino-acid chain: UDP-N-acetylglucosamine transporter YEA4 (328 aa).

The next 10 membrane-spanning stretches (helical) occupy residues 1–21 (MSFVLILSLVFGGCCSNVISF), 30–50 (INLGNIVTFTQFVSVTLIQLP), 66–86 (HIPLKIHMLAVFLFFTSSVAN), 98–118 (IHIIIRCSGTTLTMIIGWAVC), 122–142 (YSKLQVQSAIIMTLGAIVASL), 166–186 (SMFGIFVVLVATALMSLLSLL), 198–218 (WKETLFYSHFLALPLFMLGYT), 241–261 (LPIATKLFMLIANNVTQFICI), 274–294 (LTLSVVLLVRKFVSLLLSVYI), and 298–318 (VLSVTAYLGTITVFLGAGLYS).

This sequence belongs to the nucleotide-sugar transporter family. SLC35A subfamily.

The protein localises to the golgi apparatus membrane. In terms of biological role, sugar transporter that specifically mediates the transport of UDP-N-acetylglucosamine (UDP-GlcNAc) from the cytosol into Golgi vesicles where glycosyltransferases function. The chain is UDP-N-acetylglucosamine transporter YEA4 (YEA4) from Kluyveromyces lactis (strain ATCC 8585 / CBS 2359 / DSM 70799 / NBRC 1267 / NRRL Y-1140 / WM37) (Yeast).